The primary structure comprises 178 residues: Gamma-crystallin M1 (178 aa).

2 consecutive Beta/gamma crystallin 'Greek key' domains span residues 2 to 40 (GKII…RVES) and 41 to 86 (GCFM…RMIP). The interval 87–91 (PYRGS) is connecting peptide. Beta/gamma crystallin 'Greek key' domains follow at residues 92–132 (YRMR…HVMD) and 133–175 (GHWL…RRIT).

It belongs to the beta/gamma-crystallin family. Monomer.

Crystallins are the dominant structural components of the vertebrate eye lens. This chain is Gamma-crystallin M1, found in Cyprinus carpio (Common carp).